The sequence spans 221 residues: DNA replication complex GINS protein SLD5 (221 aa).

The protein belongs to the GINS4/SLD5 family. Component of the GINS complex which is a heterotetramer of gins1/psf1, gins2/psf2, gins3/psf3 and gins4/sld5. Component of the CMG helicase complex, composed of the mcm2-7 complex, the GINS complex and cdc45.

The protein resides in the nucleus. The protein localises to the chromosome. Its subcellular location is the cytoplasm. Functionally, required for initiation of chromosomal DNA replication. Core component of CDC45-MCM-GINS (CMG) helicase, the molecular machine that unwinds template DNA during replication, and around which the replisome is built. The protein is DNA replication complex GINS protein SLD5 of Xenopus laevis (African clawed frog).